The chain runs to 284 residues: Protein phosphatase 1 regulatory subunit 3B (284 aa).

The PP1-binding motif signature appears at 61–64 (RVSF). A CBM21 domain is found at 124 to 232 (RNRLQTNHVC…SNKGKNYRIT (109 aa)). Serine 260 carries the phosphoserine modification.

As to quaternary structure, interacts with glycogen, PPP1CC catalytic subunit of PP1 and PYGL. Associates with glycogen particles. Forms complexes with debranching enzyme, glycogen phosphorylase, glycogen synthase and phosphorylase kinase which is necessary for its regulation of PP1 activity. Highly expressed in liver. Moderately expressed in kidney, heart, testis, spleen and lung. Weakly expressed in skeletal muscle (at protein level). Expressed predominantly in liver. Expressed moderately in heart. Expressed weakly in lung, kidney, spleen and skeletal muscle.

Its function is as follows. Acts as a glycogen-targeting subunit for phosphatase PP1. Facilitates interaction of the PP1 with enzymes of the glycogen metabolism and regulates its activity. Suppresses the rate at which PP1 dephosphorylates (inactivates) glycogen phosphorylase and enhances the rate at which it activates glycogen synthase and therefore limits glycogen breakdown. Its activity is inhibited by PYGL, resulting in inhibition of the glycogen synthase and glycogen phosphorylase phosphatase activities of PP1. Dramatically increases basal and insulin-stimulated glycogen synthesis upon overexpression in hepatocytes. The protein is Protein phosphatase 1 regulatory subunit 3B (Ppp1r3b) of Rattus norvegicus (Rat).